Consider the following 245-residue polypeptide: MPFELKRPDRNHLLHHFKTIPGNPPVEWKISNNLIEYPEALHYMQEHVENIFAQNAPEQVWLLEHPSLYTAGTSAKKKDLLAPHLFPVYEAGRGGEFTYHGPGQRIAYIMLDLKRRRQDIRAFIGALEEWIIQTLAKFNIKGERREDRVGVWVKRPNYPFTQSGFSPEDKIAAIGIRVRKWVSFHGVSINVNPNLAHYSGIVPCGITEHGVTSFLDLGFSVTMHDIDIALKQAFEQIFGPTIDVS.

A BPL/LPL catalytic domain is found at 54–242 (QNAPEQVWLL…AFEQIFGPTI (189 aa)). Substrate contacts are provided by residues 93 to 100 (RGGEFTYH), 173 to 175 (AIG), and 186 to 188 (GVS). Cysteine 204 (acyl-thioester intermediate) is an active-site residue.

It belongs to the LipB family.

The protein resides in the cytoplasm. It carries out the reaction octanoyl-[ACP] + L-lysyl-[protein] = N(6)-octanoyl-L-lysyl-[protein] + holo-[ACP] + H(+). It functions in the pathway protein modification; protein lipoylation via endogenous pathway; protein N(6)-(lipoyl)lysine from octanoyl-[acyl-carrier-protein]: step 1/2. Functionally, catalyzes the transfer of endogenously produced octanoic acid from octanoyl-acyl-carrier-protein onto the lipoyl domains of lipoate-dependent enzymes. Lipoyl-ACP can also act as a substrate although octanoyl-ACP is likely to be the physiological substrate. This is Octanoyltransferase from Bartonella quintana (strain Toulouse) (Rochalimaea quintana).